The chain runs to 82 residues: M-zodatoxin-Lt3a (82 aa).

Residues 1–22 (MKTYAVLLALVVAFVCIAESTG) form the signal peptide. A propeptide spanning residues 23–61 (YPVEDLEDDELTELEAEALLEDLLEDLELEDLDYNEEAR) is cleaved from the precursor. The Processing quadruplet motif motif lies at 58–61 (EEAR). A81 bears the Alanine amide mark.

The protein belongs to the cationic peptide 03 (latarcin) family. 03 subfamily. Cleavage of the propeptide depends on the processing quadruplet motif (XXXR, with at least one of X being E). Expressed by the venom gland.

Its subcellular location is the secreted. It localises to the target cell membrane. It has antimicrobial activity against Gram-positive bacteria (A.globiformis VKM Ac-1112 (MIC=0.3 uM), and B.subtilis VKM B-501 (MIC=1.2 uM)), Gram-negative bacteria (E.coli DH5-alpha (MIC=2.5 uM), E.coli MH1 (MIC=6.0 uM), and P.aeruginosa PAO1 (MIC&gt;40 uM)), and yeasts (P.pastoris GS115 (MIC=20 uM), and S.cerevisiae Y190 (MIC=20 uM)). Causes paralysis, but is not lethal when injected into insect (M.domestica) larvae. A second study reports antibacterial activity against E.coli (MIC=100 uM) and S.aureus (MIC=84 uM). Furthermore, increases efficacy of antibiotics (chloramphenicol, streptomycin, kanamycin, novobiocin) when tested against E.coli, probably by facilitating their incorporation into the bacteria. The protein is M-zodatoxin-Lt3a of Lachesana tarabaevi (Spider).